We begin with the raw amino-acid sequence, 393 residues long: MKKIVLAYSGGLDTSVILKWLQENYNCEVVVFTADLGQNDDMSAIRQKAAASNVKEIFIEDLKEEFVKDFVFPMFRANTVYEGYYLLGTSIARPLIAKRQIEIAHLTGADAVAHGATGKGNDQIRFEFGYYSCDPNIKVIAPWRQWELTSRNSLIEYAKKHGIDVPLDKASEPPYSIDANLLHTSYEGKSLEDPYIEPDYTMLSKSVIPELASDTPEYIEISFKNGDPHAINNVPLSPANLLQQLNIIGGRHGIGIIDIVENRYIGIKSRGVYETPGGTILLHAHRAIESITLDREAAHLKDEIMPRYAKLIYNGYWWTTERKMLQALIDKSQDKVNGVVRLKLYKGSVMVVGRTSENSLYSHNLASFDSSGNYNHTDAEGFIKINSLRLRNS.

ATP-binding positions include 7–15 and Ala-34; that span reads AYSGGLDTS. L-citrulline is bound by residues Tyr-85 and Ser-90. Gly-115 lines the ATP pocket. L-aspartate-binding residues include Thr-117, Asn-121, and Asp-122. Asn-121 serves as a coordination point for L-citrulline. L-citrulline-binding residues include Arg-125, Ser-176, Ser-185, Glu-261, and Tyr-273.

The protein belongs to the argininosuccinate synthase family. Type 1 subfamily. In terms of assembly, homotetramer.

Its subcellular location is the cytoplasm. It carries out the reaction L-citrulline + L-aspartate + ATP = 2-(N(omega)-L-arginino)succinate + AMP + diphosphate + H(+). It participates in amino-acid biosynthesis; L-arginine biosynthesis; L-arginine from L-ornithine and carbamoyl phosphate: step 2/3. The polypeptide is Argininosuccinate synthase (Ehrlichia chaffeensis (strain ATCC CRL-10679 / Arkansas)).